Consider the following 172-residue polypeptide: DCC family protein At1g52590, chloroplastic (172 aa).

The N-terminal 25 residues, 1–25 (MAILIPASFGRLTITSRAQVRVRVS), are a transit peptide targeting the chloroplast.

Belongs to the DCC thiol-disulfide oxidoreductase family.

It localises to the plastid. It is found in the chloroplast. This chain is DCC family protein At1g52590, chloroplastic, found in Arabidopsis thaliana (Mouse-ear cress).